The following is a 531-amino-acid chain: Putative aldehyde dehydrogenase family 7 member A1 homolog (531 aa).

Position 264-269 (G264–G269) interacts with NAD(+). The active-site Proton acceptor is E286. C320 acts as the Nucleophile in catalysis.

It belongs to the aldehyde dehydrogenase family. As to quaternary structure, homotetramer.

It catalyses the reaction an aldehyde + NAD(+) + H2O = a carboxylate + NADH + 2 H(+). This Caenorhabditis elegans protein is Putative aldehyde dehydrogenase family 7 member A1 homolog (alh-9).